The sequence spans 899 residues: Protein translocase subunit SecA (899 aa).

Residues glutamine 87, 105–109 (GEGKT), and aspartate 512 each bind ATP. Residues 846 to 899 (MEEEQQQQAQKKIVFNLGEEPATAPQPARSKKSASRNDPCPCGSGKKYKKCCGK) form a disordered region. Zn(2+) is bound by residues cysteine 885, cysteine 887, cysteine 896, and cysteine 897.

It belongs to the SecA family. Monomer and homodimer. Part of the essential Sec protein translocation apparatus which comprises SecA, SecYEG and auxiliary proteins SecDF-YajC and YidC. The cofactor is Zn(2+).

The protein resides in the cell inner membrane. Its subcellular location is the cytoplasm. The catalysed reaction is ATP + H2O + cellular proteinSide 1 = ADP + phosphate + cellular proteinSide 2.. Functionally, part of the Sec protein translocase complex. Interacts with the SecYEG preprotein conducting channel. Has a central role in coupling the hydrolysis of ATP to the transfer of proteins into and across the cell membrane, serving as an ATP-driven molecular motor driving the stepwise translocation of polypeptide chains across the membrane. The polypeptide is Protein translocase subunit SecA (Geobacter metallireducens (strain ATCC 53774 / DSM 7210 / GS-15)).